The primary structure comprises 200 residues: Dipicolinate synthase subunit B (200 aa).

In terms of assembly, dipicolinate synthase likely consists of DpaA and DpaB, since both proteins are required for DPA synthesis.

The catalysed reaction is (S)-2,3-dihydrodipicolinate + NADP(+) = dipicolinate + NADPH + H(+). Together with DpaA, catalyzes the conversion of dihydrodipicolinate to dipicolinate (DPA), which constitutes up to 10% of the dry weight of the spore. The chain is Dipicolinate synthase subunit B (dpaB) from Bacillus subtilis (strain 168).